We begin with the raw amino-acid sequence, 380 residues long: Tomoregulin-1 (380 aa).

Positions M1–A39 are cleaved as a signal peptide. Over S40–V330 the chain is Extracellular. 2 consecutive Kazal-like domains span residues A98 to S145 and V189 to D237. Intrachain disulfides connect C99–C129, C103–C122, C111–C143, C190–C221, C194–C214, C203–C235, C275–C288, C283–C299, and C301–C310. The EGF-like domain maps to N271–E311. A helical membrane pass occupies residues L331–I351. Residues T352–V380 lie on the Cytoplasmic side of the membrane. Positions N359 to V380 are disordered. Residues Q366–V380 show a composition bias toward polar residues.

It belongs to the tomoregulin family. May interact with ST14. Expressed predominantly in brain, and at lower levels in heart, placenta and skeletal muscle. Down-regulated in brain tumors as compared to control brain tissues.

It is found in the cell membrane. Neuron-specific restriction factor that prevents herpes simplex virus 1 (HHV-1) infection in the brain by blocking viral entry. Also able to restrict herpes simplex virus 2 (HHV-2) infection, although to a lesser extent. Acts by preventing the association between the viral glycoprotein D (gD) and its cell surface receptor NECTIN1, thereby inhibiting fusion of the virus and the cell membrane. Also able to prevent the association between the viral glycoprotein B (gB) and MYH9/NMMHC-IIA and MYH10/NMMHC-IIB receptors. May be a tumor suppressor in brain cancers. The protein is Tomoregulin-1 of Homo sapiens (Human).